Consider the following 309-residue polypeptide: Zinc finger protein-like 1 homolog (309 aa).

Residues 1–43 (MGLCKCPKRKVTNLFCYEHRVNVCEFCLVDNHPNCVVQSYLTW) form a B box-type; degenerate zinc finger. The RING-type; atypical zinc-finger motif lies at 53–101 (CSLCKTTLAEGDTIRLNCLHLLHWKCFDEWAANFPATTAPAGYRCPCCS). Residues 200-221 (GAESSSDTRPLLQLRDADNEEN) form a disordered region. Residues 254–274 (KIALFVIFLAVLALITIIMVM) traverse the membrane as a helical segment.

The protein belongs to the ZFPL1 family.

The protein resides in the membrane. This is Zinc finger protein-like 1 homolog from Caenorhabditis elegans.